A 120-amino-acid chain; its full sequence is Flagellar protein FliT (120 aa).

Residues 1-50 (MTNFIPSLTDWHALHALSITMLDLAHSGKWDELIEQEMNYVQLVEGIARN) are required for homodimerization. The fliD binding stretch occupies residues 59–97 (LINQAKEILNAVLRNEAELKTLLQHRMEELRQLIDQTGK).

The protein belongs to the FliT family. Homodimer. Interacts with FliD and FlhC.

It localises to the cytoplasm. The protein resides in the cytosol. Its function is as follows. Dual-function protein that regulates the transcription of class 2 flagellar operons and that also acts as an export chaperone for the filament-capping protein FliD. As a transcriptional regulator, acts as an anti-FlhDC factor; it directly binds FlhC, thus inhibiting the binding of the FlhC/FlhD complex to class 2 promoters, resulting in decreased expression of class 2 flagellar operons. As a chaperone, effects FliD transition to the membrane by preventing its premature polymerization, and by directing it to the export apparatus. The sequence is that of Flagellar protein FliT from Citrobacter koseri (strain ATCC BAA-895 / CDC 4225-83 / SGSC4696).